The primary structure comprises 119 residues: Large ribosomal subunit protein uL18 (119 aa).

Residues 1–23 are disordered; sequence MISKPDKNKTRQRRHARVRGKIS. Residues 10-20 are compositionally biased toward basic residues; the sequence is TRQRRHARVRG.

This sequence belongs to the universal ribosomal protein uL18 family. In terms of assembly, part of the 50S ribosomal subunit; part of the 5S rRNA/L5/L18/L25 subcomplex. Contacts the 5S and 23S rRNAs.

In terms of biological role, this is one of the proteins that bind and probably mediate the attachment of the 5S RNA into the large ribosomal subunit, where it forms part of the central protuberance. This Lacticaseibacillus casei (strain BL23) (Lactobacillus casei) protein is Large ribosomal subunit protein uL18.